Reading from the N-terminus, the 127-residue chain is Ribosome-binding factor A (127 aa).

It belongs to the RbfA family. As to quaternary structure, monomer. Binds 30S ribosomal subunits, but not 50S ribosomal subunits or 70S ribosomes.

It is found in the cytoplasm. In terms of biological role, one of several proteins that assist in the late maturation steps of the functional core of the 30S ribosomal subunit. Associates with free 30S ribosomal subunits (but not with 30S subunits that are part of 70S ribosomes or polysomes). Required for efficient processing of 16S rRNA. May interact with the 5'-terminal helix region of 16S rRNA. In Geobacillus kaustophilus (strain HTA426), this protein is Ribosome-binding factor A.